The following is a 286-amino-acid chain: Polyamine aminopropyltransferase (286 aa).

A PABS domain is found at proline 5–aspartate 238. Glutamine 33 lines the S-methyl-5'-thioadenosine pocket. Spermidine is bound by residues histidine 64 and aspartate 88. S-methyl-5'-thioadenosine contacts are provided by residues glutamate 108 and aspartate 140–glycine 141. The active-site Proton acceptor is the aspartate 158. Residue aspartate 158–aspartate 161 coordinates spermidine. Proline 165 lines the S-methyl-5'-thioadenosine pocket.

It belongs to the spermidine/spermine synthase family. Homodimer or homotetramer.

It is found in the cytoplasm. The enzyme catalyses S-adenosyl 3-(methylsulfanyl)propylamine + putrescine = S-methyl-5'-thioadenosine + spermidine + H(+). It participates in amine and polyamine biosynthesis; spermidine biosynthesis; spermidine from putrescine: step 1/1. Its function is as follows. Catalyzes the irreversible transfer of a propylamine group from the amino donor S-adenosylmethioninamine (decarboxy-AdoMet) to putrescine (1,4-diaminobutane) to yield spermidine. The protein is Polyamine aminopropyltransferase of Klebsiella pneumoniae subsp. pneumoniae (strain ATCC 700721 / MGH 78578).